The primary structure comprises 426 residues: Serine hydroxymethyltransferase (426 aa).

Residues Leu-118 and 122 to 124 (GHL) contribute to the (6S)-5,6,7,8-tetrahydrofolate site. N6-(pyridoxal phosphate)lysine is present on Lys-227.

The protein belongs to the SHMT family. Homodimer. Requires pyridoxal 5'-phosphate as cofactor.

It localises to the cytoplasm. It catalyses the reaction (6R)-5,10-methylene-5,6,7,8-tetrahydrofolate + glycine + H2O = (6S)-5,6,7,8-tetrahydrofolate + L-serine. It participates in one-carbon metabolism; tetrahydrofolate interconversion. It functions in the pathway amino-acid biosynthesis; glycine biosynthesis; glycine from L-serine: step 1/1. In terms of biological role, catalyzes the reversible interconversion of serine and glycine with tetrahydrofolate (THF) serving as the one-carbon carrier. This reaction serves as the major source of one-carbon groups required for the biosynthesis of purines, thymidylate, methionine, and other important biomolecules. Also exhibits THF-independent aldolase activity toward beta-hydroxyamino acids, producing glycine and aldehydes, via a retro-aldol mechanism. The chain is Serine hydroxymethyltransferase from Mycolicibacterium paratuberculosis (strain ATCC BAA-968 / K-10) (Mycobacterium paratuberculosis).